Consider the following 144-residue polypeptide: UPF0299 membrane protein MS1271 (144 aa).

4 helical membrane-spanning segments follow: residues 5–25 (IFLF…GEGI), 28–48 (LIPI…IGLT), 57–77 (VFFG…PVSV), and 92–112 (SLLI…GFLG).

The protein belongs to the UPF0299 family.

The protein resides in the cell inner membrane. The polypeptide is UPF0299 membrane protein MS1271 (Mannheimia succiniciproducens (strain KCTC 0769BP / MBEL55E)).